Here is a 193-residue protein sequence, read N- to C-terminus: Shikimate kinase (193 aa).

31-36 is an ATP binding site; that stretch reads GVGKTT. T35 contributes to the Mg(2+) binding site. Positions 53, 77, and 103 each coordinate substrate. R141 contacts ATP. R160 serves as a coordination point for substrate. Q176 lines the ATP pocket.

The protein belongs to the shikimate kinase family. In terms of assembly, monomer. It depends on Mg(2+) as a cofactor.

Its subcellular location is the cytoplasm. The catalysed reaction is shikimate + ATP = 3-phosphoshikimate + ADP + H(+). Its pathway is metabolic intermediate biosynthesis; chorismate biosynthesis; chorismate from D-erythrose 4-phosphate and phosphoenolpyruvate: step 5/7. Catalyzes the specific phosphorylation of the 3-hydroxyl group of shikimic acid using ATP as a cosubstrate. The sequence is that of Shikimate kinase from Novosphingobium aromaticivorans (strain ATCC 700278 / DSM 12444 / CCUG 56034 / CIP 105152 / NBRC 16084 / F199).